Consider the following 339-residue polypeptide: Glyceraldehyde-3-phosphate dehydrogenase (339 aa).

NAD(+) is bound by residues 13–14 (RI), aspartate 35, and lysine 84. Residues 156-158 (SCT), threonine 187, 216-217 (TG), and arginine 239 each bind D-glyceraldehyde 3-phosphate. Cysteine 157 serves as the catalytic Nucleophile. Position 321 (asparagine 321) interacts with NAD(+).

This sequence belongs to the glyceraldehyde-3-phosphate dehydrogenase family. Homotetramer.

The protein resides in the cytoplasm. The catalysed reaction is D-glyceraldehyde 3-phosphate + phosphate + NAD(+) = (2R)-3-phospho-glyceroyl phosphate + NADH + H(+). Its pathway is carbohydrate degradation; glycolysis; pyruvate from D-glyceraldehyde 3-phosphate: step 1/5. This is Glyceraldehyde-3-phosphate dehydrogenase (G3PD) from Brugia malayi (Filarial nematode worm).